The chain runs to 1023 residues: Sodium/potassium-transporting ATPase subunit alpha-1 (1023 aa).

A propeptide spanning residues 1-5 (MAFKV) is cleaved from the precursor. Residues 1–11 (MAFKVGRDKYE) are compositionally biased toward basic and acidic residues. The tract at residues 1-38 (MAFKVGRDKYEPAAVSEQGDKKGKKGKKDRDMDELKKE) is disordered. The Cytoplasmic portion of the chain corresponds to 6–87 (GRDKYEPAAV…NALTPPPTTP (82 aa)). N6-acetyllysine is present on K9. At Y10 the chain carries Phosphotyrosine. Residue S16 is modified to Phosphoserine; by PKC. K21 is subject to N6-acetyllysine. Positions 28–38 (KDRDMDELKKE) are enriched in basic and acidic residues. S40 and S47 each carry phosphoserine. The segment at 82–84 (PPP) is phosphoinositide-3 kinase binding. A helical transmembrane segment spans residues 88-108 (EWIKFCRQLFGGFSMLLWIGA). At 109–131 (ILCFLAYSIQAATEEEPQNDNLY) the chain is on the extracellular side. The chain crosses the membrane as a helical span at residues 132–152 (LGVVLSAVVIITGCFSYYQEA). Over 153–288 (KSSKIMESFK…GGQTPIAAEI (136 aa)) the chain is Cytoplasmic. Residues 216–235 (SSLTGESEPQTRSPDFTNEN) are disordered. S228 bears the Phosphoserine mark. Y260 bears the Phosphotyrosine mark. The chain crosses the membrane as a helical span at residues 289–308 (EHFIHIITGVAVFLGVSFFI). The Extracellular segment spans residues 309–320 (LSLILEYTWLEA). The helical transmembrane segment at 321–338 (VIFLIGIIVANVPEGLLA) threads the bilayer. The Cytoplasmic portion of the chain corresponds to 339 to 772 (TVTVCLTLTA…EEGRLIFDNL (434 aa)). The 4-aspartylphosphate intermediate role is filled by D376. Phosphoserine occurs at positions 452 and 484. K487 is a binding site for ATP. Y542 carries the post-translational modification Phosphotyrosine. Residues 596-717 (RAAVPDAVGK…QGAIVAVTGD (122 aa)) are mediates interaction with SCN7A. K661 carries the N6-succinyllysine modification. 2 positions are modified to phosphoserine: S668 and S675. Mg(2+) is bound by residues D717 and D721. The helical transmembrane segment at 773–792 (KKSIAYTLTSNIPEITPFLI) threads the bilayer. At 793-802 (FIIANIPLPL) the chain is on the extracellular side. Residues 803–823 (GTVTILCIDLGTDMVPAISLA) traverse the membrane as a helical segment. Topologically, residues 824–843 (YEQAESDIMKRQPRNPKTDK) are cytoplasmic. A helical transmembrane segment spans residues 844-866 (LVNERLISTAYGQIGMIQALGGF). The Extracellular portion of the chain corresponds to 867–918 (FTYFVILAENGFLPLHLLGLRVDWDDRWINDVEDSYGQQWTYEQRKIVEFTC). The chain crosses the membrane as a helical span at residues 919-938 (HTAFFVSIVVVQWADLVICK). Topologically, residues 939 to 951 (TRRNSVFQQGMKN) are cytoplasmic. S943 carries the post-translational modification Phosphoserine; by PKA. The helical transmembrane segment at 952 to 970 (KILIFGLFEETALAAFLSY) threads the bilayer. Residues 971-985 (CPGMGVALRMYPLKP) lie on the Extracellular side of the membrane. Residues 986 to 1006 (TWWFCAFPYSLLIFVYDEVRK) form a helical membrane-spanning segment. The Cytoplasmic portion of the chain corresponds to 1007–1023 (LIIRRRPGGWVEKETYY).

This sequence belongs to the cation transport ATPase (P-type) (TC 3.A.3) family. Type IIC subfamily. In terms of assembly, the sodium/potassium-transporting ATPase is composed of a catalytic alpha subunit, an auxiliary non-catalytic beta subunit and an additional regulatory subunit. Interacts with regulatory subunit FXYD1. Interacts with regulatory subunit FXYD3. Interacts with SIK1. Interacts with SLC35G1 and STIM1. Interacts with CLN3; this interaction regulates the sodium/potassium-transporting ATPase complex localization at the plasma membrane. Interacts with SCN7A; activates ATP1A1 P-type sodium:potassium-exchanging transporter activity which indirectly signals to nearby neurons to regulate sodium homeostasis. Post-translationally, phosphorylation on Tyr-10 modulates pumping activity. Phosphorylation of Ser-943 by PKA modulates the response of ATP1A1 to PKC. Dephosphorylation by protein phosphatase 2A (PP2A) following increases in intracellular sodium, leading to increase catalytic activity.

Its subcellular location is the cell membrane. It localises to the basolateral cell membrane. The protein resides in the sarcolemma. It is found in the cell projection. The protein localises to the axon. Its subcellular location is the melanosome. It catalyses the reaction K(+)(out) + Na(+)(in) + ATP + H2O = K(+)(in) + Na(+)(out) + ADP + phosphate + H(+). Its function is as follows. This is the catalytic component of the active enzyme, which catalyzes the hydrolysis of ATP coupled with the exchange of sodium and potassium ions across the plasma membrane. This action creates the electrochemical gradient of sodium and potassium ions, providing the energy for active transport of various nutrients. Could also be part of an osmosensory signaling pathway that senses body-fluid sodium levels and controls salt intake behavior as well as voluntary water intake to regulate sodium homeostasis. The chain is Sodium/potassium-transporting ATPase subunit alpha-1 (ATP1A1) from Pongo abelii (Sumatran orangutan).